The following is a 253-amino-acid chain: Small ribosomal subunit protein uS2 (253 aa).

A disordered region spans residues 226-253 (QGADNADVEKELSESVEENSAEEVDDAE). A compositionally biased stretch (acidic residues) spans 239–253 (ESVEENSAEEVDDAE).

Belongs to the universal ribosomal protein uS2 family.

This chain is Small ribosomal subunit protein uS2, found in Lactobacillus delbrueckii subsp. bulgaricus (strain ATCC 11842 / DSM 20081 / BCRC 10696 / JCM 1002 / NBRC 13953 / NCIMB 11778 / NCTC 12712 / WDCM 00102 / Lb 14).